The chain runs to 226 residues: MSTVFALSNISKFFGKNNELPIITNANIKIKKGEIVALIGRSGSGKSTLLHIAGLLDTPSSGNIFINNIECSNKTSDKDKTFLRRHFLGFIYQFHHLLQEFSVLENVMLPQIIIGKSKSIAKKNAMEILERVKLQDKFSMSISQLSGGERQRVAIARSLINCPLIVLADEPTGSLDNNTAFEVFSLLQEYAKEKNIAIFLATHNKSLAQKACRIVEINSCMLSSVD.

In terms of domain architecture, ABC transporter spans 5–225 (FALSNISKFF…EINSCMLSSV (221 aa)). 40–47 (GRSGSGKS) contacts ATP.

This sequence belongs to the ABC transporter superfamily. Lipoprotein translocase (TC 3.A.1.125) family. The complex is composed of two ATP-binding proteins (LolD) and two transmembrane proteins (LolC and LolE).

The protein resides in the cell inner membrane. Functionally, part of the ABC transporter complex LolCDE involved in the translocation of mature outer membrane-directed lipoproteins, from the inner membrane to the periplasmic chaperone, LolA. Responsible for the formation of the LolA-lipoprotein complex in an ATP-dependent manner. This is Lipoprotein-releasing system ATP-binding protein LolD from Ehrlichia canis (strain Jake).